We begin with the raw amino-acid sequence, 309 residues long: Homoserine kinase (309 aa).

91–101 (PLARGLGSSAA) is a binding site for ATP.

This sequence belongs to the GHMP kinase family. Homoserine kinase subfamily.

Its subcellular location is the cytoplasm. The enzyme catalyses L-homoserine + ATP = O-phospho-L-homoserine + ADP + H(+). It participates in amino-acid biosynthesis; L-threonine biosynthesis; L-threonine from L-aspartate: step 4/5. Its function is as follows. Catalyzes the ATP-dependent phosphorylation of L-homoserine to L-homoserine phosphate. This Bacillus velezensis (strain DSM 23117 / BGSC 10A6 / LMG 26770 / FZB42) (Bacillus amyloliquefaciens subsp. plantarum) protein is Homoserine kinase.